Here is a 1274-residue protein sequence, read N- to C-terminus: DENN domain-containing protein 3 (1274 aa).

The tract at residues 65 to 108 (GQVPGASCALGKGRRRSFRKKREKPRMEPWKSHPGDSKGPDSED) is disordered. One can recognise a uDENN domain in the interval 75-245 (GKGRRRSFRK…LIPSPPPGPL (171 aa)). The segment covering 76–88 (KGRRRSFRKKREK) has biased composition (basic residues). Basic and acidic residues predominate over residues 89-105 (PRMEPWKSHPGDSKGPD). In terms of domain architecture, cDENN spans 268 to 400 (IVDLDLHLPL…PLLLAQTFIQ (133 aa)). The dDENN domain occupies 402–506 (VQSLQLHPDL…KARLNGRMDA (105 aa)). Residues 520 to 970 (RIDRMLISPR…KHKINPSAGE (451 aa)) are linker. 2 positions are modified to phosphoserine; by ULK1: Ser554 and Ser572. Residue Tyr940 is modified to Phosphotyrosine. WD repeat units lie at residues 975–1013 (AIEVLLYTPGRLDPAEKVEDAHPKLWCALNEGKVVVFDA), 1019–1055 (HQHCFKVGSSKVNCMVMAEHNQVWVGSEDSVIYIINV), 1059–1099 (SCNK…AWNV), 1103–1140 (RVISRFQLSYGDLLSISLHNDRIWCCTVHKILVVTPQG), 1146–1181 (LKHPKDASFLAFQLLPEEQQLWAASTGVSELYMWSL), 1186–1228 (QPPQ…IYVM), and 1234–1273 (TVEKELVAHLDTVRTLCSAEDRYVLSGAGQEEGKIAIWKV).

In terms of assembly, forms oligomers. Interacts with 6 of the 7 known isoforms of 14-3-3 proteins.

The protein localises to the cytoplasm. In terms of biological role, guanine nucleotide exchange factor (GEF) activating Rab12. Promotes the exchange of GDP to GTP, converting inactive GDP-bound Rab12 into its active GTP-bound form. Regulates autophagy in response to starvation through Rab12 activation. Starvation leads to ULK1/2-dependent phosphorylation of Ser-554 and Ser-572, which in turn allows recruitment of 14-3-3 adapter proteins and leads to up-regulation of GEF activity towards Rab12. Also plays a role in protein transport from recycling endosomes to lysosomes, regulating, for instance, the degradation of the transferrin receptor and of the amino acid transporter PAT4. Starvation also induces phosphorylation at Tyr-940, which leads to up-regulated GEF activity and initiates autophagy. In Mus musculus (Mouse), this protein is DENN domain-containing protein 3 (Dennd3).